The sequence spans 332 residues: Glycerol-3-phosphate dehydrogenase [NAD(P)+] (332 aa).

Residues Ser15, Trp16, and Lys110 each contribute to the NADPH site. Lys110, Gly137, and Ser139 together coordinate sn-glycerol 3-phosphate. Ala141 provides a ligand contact to NADPH. Sn-glycerol 3-phosphate is bound by residues Lys192, Asp245, Ser255, Arg256, and Asn257. The Proton acceptor role is filled by Lys192. Arg256 serves as a coordination point for NADPH. Glu282 is a binding site for NADPH.

This sequence belongs to the NAD-dependent glycerol-3-phosphate dehydrogenase family.

The protein resides in the cytoplasm. It carries out the reaction sn-glycerol 3-phosphate + NAD(+) = dihydroxyacetone phosphate + NADH + H(+). It catalyses the reaction sn-glycerol 3-phosphate + NADP(+) = dihydroxyacetone phosphate + NADPH + H(+). It participates in membrane lipid metabolism; glycerophospholipid metabolism. In terms of biological role, catalyzes the reduction of the glycolytic intermediate dihydroxyacetone phosphate (DHAP) to sn-glycerol 3-phosphate (G3P), the key precursor for phospholipid synthesis. In Coxiella burnetii (strain RSA 331 / Henzerling II), this protein is Glycerol-3-phosphate dehydrogenase [NAD(P)+].